The sequence spans 369 residues: ATP-dependent 6-phosphofructokinase (369 aa).

ATP contacts are provided by residues Gly15, 81–82 (KG), and 108–111 (GDGS). Asp109 is a Mg(2+) binding site. Substrate contacts are provided by residues 132-134 (TID), Arg169, 176-178 (MGR), Glu230, Arg266, and 272-275 (HIQR). Asp134 functions as the Proton acceptor in the catalytic mechanism.

This sequence belongs to the phosphofructokinase type A (PFKA) family. Mixed-substrate PFK group III subfamily. In terms of assembly, homodimer or homotetramer. Mg(2+) serves as cofactor.

The protein resides in the cytoplasm. It carries out the reaction beta-D-fructose 6-phosphate + ATP = beta-D-fructose 1,6-bisphosphate + ADP + H(+). The protein operates within carbohydrate degradation; glycolysis; D-glyceraldehyde 3-phosphate and glycerone phosphate from D-glucose: step 3/4. Catalyzes the phosphorylation of D-fructose 6-phosphate to fructose 1,6-bisphosphate by ATP, the first committing step of glycolysis. The protein is ATP-dependent 6-phosphofructokinase of Thermosynechococcus vestitus (strain NIES-2133 / IAM M-273 / BP-1).